Consider the following 3843-residue polypeptide: NBPF family member NBPF19 (3843 aa).

The stretch at 70–130 (MLRNERQFKE…RSLNEHLQAL (61 aa)) forms a coiled coil. 45 consecutive Olduvai domains span residues 165–257 (ENDN…HIIP), 258–329 (ENES…VDIG), 330–421 (RHRW…PSCP), 424–479 (SREL…LDVD), 480–572 (RIKK…RSKK), 573–665 (ERRR…PSCP), 668–723 (SREL…LDVD), 724–816 (RIKK…RSKK), 817–909 (ERRR…PSCP), 912–967 (SREL…LDVD), 968–1060 (RIKK…RSKK), 1061–1153 (ERRR…PSCP), 1156–1211 (SREL…LDVD), 1212–1304 (RIKK…RSKK), 1305–1397 (ERRR…PSCP), 1400–1455 (SREL…LDVD), 1456–1548 (RIKK…RSKK), 1549–1641 (ERRR…PSCP), 1644–1699 (SREL…LDVD), 1700–1792 (RIKK…RSKK), 1793–1885 (ERRR…PSCP), 1888–1943 (SREL…LDVD), 1944–2036 (RIKK…RSKK), 2037–2129 (ERRR…PSCP), 2132–2187 (SREL…LDVD), 2188–2280 (RIKK…RSKK), 2281–2373 (ERRR…PSCP), 2376–2431 (SREL…LDVD), 2432–2524 (RIKK…RSKK), 2525–2617 (ERRR…PSCP), 2620–2675 (SREL…LDVD), 2676–2768 (RIKK…RSKK), 2769–2861 (ERRR…PSCP), 2864–2919 (SREL…LDVD), 2920–3012 (RIKK…RSKK), 3013–3105 (ERRR…PSCP), 3108–3163 (SREL…LDVD), 3164–3256 (RIKK…RSKK), 3257–3349 (ERRR…PSCP), 3352–3407 (SREL…LDVD), 3408–3500 (RIKK…RSKK), 3501–3593 (ERRR…PSCP), 3596–3651 (SREL…LDVD), 3652–3744 (RIKK…RSKK), and 3745–3843 (ERRR…IFPQ). Disordered regions lie at residues 180-203 (EKVQ…PEDS) and 249-295 (WEDA…EGYS). Acidic residues-rich tracts occupy residues 259–268 (NESDDEEEEE) and 279–291 (ESEE…ESWD). The disordered stretch occupies residues 559–597 (KGKGKKRRGRRSKKERRRGRKEGEEDQNPPCPRLSRELL). The span at 560–578 (GKGKKRRGRRSKKERRRGR) shows a compositional bias: basic residues. Positions 803 to 841 (KGKGKKRRGRRSKKERRRGRKEGEEDQNPPCPRLSRELL) are disordered. Positions 804–822 (GKGKKRRGRRSKKERRRGR) are enriched in basic residues. The tract at residues 1047-1085 (KGKGKKRRGRRSKKERRRGRKEGEEDQNPPCPRLSRELL) is disordered. The segment covering 1048–1066 (GKGKKRRGRRSKKERRRGR) has biased composition (basic residues). Residues 1291–1329 (KGKGKKRRGRRSKKERRRGRKEGEEDQNPPCPRLSRELL) form a disordered region. Basic residues predominate over residues 1292-1310 (GKGKKRRGRRSKKERRRGR). A disordered region spans residues 1535–1573 (KGKGKKRRGRRSKKERRRGRKEGEEDQNPPCPRLSRELL). Residues 1536 to 1554 (GKGKKRRGRRSKKERRRGR) show a composition bias toward basic residues. The segment at 1779 to 1817 (KGKGKKRRGRRSKKERRRGRKEGEEDQNPPCPRLSRELL) is disordered. Basic residues predominate over residues 1780–1798 (GKGKKRRGRRSKKERRRGR). The interval 2023 to 2061 (KGKGKKRRGRRSKKERRRGRKEGEEDQNPPCPRLSRELL) is disordered. Residues 2024–2042 (GKGKKRRGRRSKKERRRGR) show a composition bias toward basic residues. The interval 2267–2305 (KGKGKKRRGRRSKKERRRGRKEGEEDQNPPCPRLSRELL) is disordered. Over residues 2268–2286 (GKGKKRRGRRSKKERRRGR) the composition is skewed to basic residues. The tract at residues 2511–2549 (KGKGKKRRGRRSKKERRRGRKEGEEDQNPPCPRLSRELL) is disordered. The segment covering 2512 to 2530 (GKGKKRRGRRSKKERRRGR) has biased composition (basic residues). The segment at 2755 to 2793 (KGKGKKRRGRRSKKERRRGRKEGEEDQNPPCPRLSRELL) is disordered. Basic residues predominate over residues 2756-2774 (GKGKKRRGRRSKKERRRGR). Positions 2999–3037 (KGKGKKRRGRRSKKERRRGRKEGEEDQNPPCPRLSRELL) are disordered. Basic residues predominate over residues 3000–3018 (GKGKKRRGRRSKKERRRGR). A disordered region spans residues 3243–3281 (KGKGKKRRGRRSKKERRRGRKEGEEDQNPPCPRLSRELL). A compositionally biased stretch (basic residues) spans 3244 to 3262 (GKGKKRRGRRSKKERRRGR). The interval 3487–3525 (KGKGKKRRGRRSKKERRRGRKEGEEDQNPPCPRLSRELL) is disordered. The segment covering 3488-3506 (GKGKKRRGRRSKKERRRGR) has biased composition (basic residues). The disordered stretch occupies residues 3731-3764 (KGKGKKRRGRRSKKERRRGRKEGEEDQNPPCPRL). The segment covering 3732 to 3750 (GKGKKRRGRRSKKERRRGR) has biased composition (basic residues).

The protein belongs to the NBPF family.

Its subcellular location is the cytoplasm. The chain is NBPF family member NBPF19 from Homo sapiens (Human).